We begin with the raw amino-acid sequence, 198 residues long: Recombination protein RecR (198 aa).

The C4-type zinc finger occupies 57–72 (CSICGNITEEDPCEIC). One can recognise a Toprim domain in the interval 80-175 (SIILVVEEPK…TVTRLAHGLS (96 aa)).

This sequence belongs to the RecR family.

May play a role in DNA repair. It seems to be involved in an RecBC-independent recombinational process of DNA repair. It may act with RecF and RecO. The sequence is that of Recombination protein RecR from Enterococcus faecalis (strain ATCC 700802 / V583).